The following is a 79-amino-acid chain: Conotoxin 8 (79 aa).

The N-terminal stretch at 1–22 (MKLTCVLIITVLFLTASQLITA) is a signal peptide. A propeptide spanning residues 23 to 47 (DYSRGQRQYRAVRLGDEMRNFKGAR) is cleaved from the precursor. Cystine bridges form between cysteine 49-cysteine 62, cysteine 56-cysteine 67, and cysteine 61-cysteine 77.

This sequence belongs to the conotoxin O1 superfamily. Expressed by the venom duct.

The protein localises to the secreted. The sequence is that of Conotoxin 8 from Conus vexillum (Flag cone).